Reading from the N-terminus, the 157-residue chain is Crossover junction endodeoxyribonuclease RuvC (157 aa).

Residues D7, E67, and D140 contribute to the active site. Residues D7, E67, and D140 each coordinate Mg(2+).

The protein belongs to the RuvC family. In terms of assembly, homodimer which binds Holliday junction (HJ) DNA. The HJ becomes 2-fold symmetrical on binding to RuvC with unstacked arms; it has a different conformation from HJ DNA in complex with RuvA. In the full resolvosome a probable DNA-RuvA(4)-RuvB(12)-RuvC(2) complex forms which resolves the HJ. It depends on Mg(2+) as a cofactor.

The protein localises to the cytoplasm. It catalyses the reaction Endonucleolytic cleavage at a junction such as a reciprocal single-stranded crossover between two homologous DNA duplexes (Holliday junction).. Its function is as follows. The RuvA-RuvB-RuvC complex processes Holliday junction (HJ) DNA during genetic recombination and DNA repair. Endonuclease that resolves HJ intermediates. Cleaves cruciform DNA by making single-stranded nicks across the HJ at symmetrical positions within the homologous arms, yielding a 5'-phosphate and a 3'-hydroxyl group; requires a central core of homology in the junction. The consensus cleavage sequence is 5'-(A/T)TT(C/G)-3'. Cleavage occurs on the 3'-side of the TT dinucleotide at the point of strand exchange. HJ branch migration catalyzed by RuvA-RuvB allows RuvC to scan DNA until it finds its consensus sequence, where it cleaves and resolves the cruciform DNA. The protein is Crossover junction endodeoxyribonuclease RuvC of Rickettsia akari (strain Hartford).